Here is an 87-residue protein sequence, read N- to C-terminus: Large ribosomal subunit protein eL33 (87 aa).

This sequence belongs to the eukaryotic ribosomal protein eL33 family.

This is Large ribosomal subunit protein eL33 from Pyrococcus woesei.